Reading from the N-terminus, the 604-residue chain is Numb-like protein (604 aa).

Disordered stretches follow at residues 1–68 (MSRS…QWQA), 223–283 (GSFR…PVAA), 372–457 (ASAG…TLQP), and 531–604 (KAGA…EIEL). The 152-residue stretch at 74–225 (RKGTCSFPVR…RTSFAREGSF (152 aa)) folds into the PID domain. Serine 224 and serine 228 each carry phosphoserine. The segment covering 233-245 (PAEREAGDKKKAE) has biased composition (basic and acidic residues). A compositionally biased stretch (low complexity) spans 246-260 (AAAAPAVAPGPAQPG). Serine 263 carries the phosphoserine modification. Position 279 is a phosphothreonine (threonine 279). The span at 409 to 418 (TPSEAERWLE) shows a compositional bias: basic and acidic residues. Serine 411 carries the phosphoserine modification. Composition is skewed to low complexity over residues 427–441 (QQQQ…QQQQ) and 542–552 (SAPGGQARPRP). Over residues 553 to 568 (NGAPWPPEPAPAPAPE) the composition is skewed to pro residues.

Interacts (via PTB domain) with MAP3K7IP2 (via C-terminal). Interacts (via C-terminal) with TRAF6 (via TRAF domains). Associates with EPS15 and NOTCH1. Preferentially expressed in the nervous system. In the developing neocortex, expressed in postmitotic neurons in the cortical plate but not in progenitors within the ventricular zone.

The protein localises to the cytoplasm. Plays a role in the process of neurogenesis. Required throughout embryonic neurogenesis to maintain neural progenitor cells, also called radial glial cells (RGCs), by allowing their daughter cells to choose progenitor over neuronal cell fate. Not required for the proliferation of neural progenitor cells before the onset of embryonic neurogenesis. Also required postnatally in the subventricular zone (SVZ) neurogenesis by regulating SVZ neuroblasts survival and ependymal wall integrity. Negative regulator of NF-kappa-B signaling pathway. The inhibition of NF-kappa-B activation is mediated at least in part, by preventing MAP3K7IP2 to interact with polyubiquitin chains of TRAF6 and RIPK1 and by stimulating the 'Lys-48'-linked polyubiquitination and degradation of TRAF6 in cortical neurons. This is Numb-like protein (Numbl) from Mus musculus (Mouse).